A 419-amino-acid polypeptide reads, in one-letter code: Synaptotagmin-1 (419 aa).

Over 1-58 the chain is Vesicular; that stretch reads MVSESHHEALAAPPVTTVATVLPSNATEPASPGEGKEDAFSKLKEKFMNELHKIPLPP. N25 carries N-linked (GlcNAc...) asparagine glycosylation. Residues 59–80 form a helical membrane-spanning segment; sequence WALIAIAIVAVLLVLTCCFCIC. Residues C75, C76, C78, C80, and C83 are each lipidated (S-palmitoyl cysteine). The Cytoplasmic portion of the chain corresponds to 81–419; that stretch reads KKCLFKKKNK…EVDAMLAVKK (339 aa). The segment at 108 to 139 is disordered; that stretch reads KDLGKTMKDQDDDAETGLTDGEEKEEPKEEEK. Over residues 117-131 the composition is skewed to acidic residues; sequence QDDDAETGLTDGEEK. Position 126 is a phosphothreonine (T126). Positions 133–379 are phospholipid binding; that stretch reads EPKEEEKLGK…AIGKVFVGYN (247 aa). The region spanning 139-258 is the C2 1 domain; it reads KLGKLQYSLD…DFGHVTEEWR (120 aa). Ca(2+)-binding residues include L169, D170, and D176. Position 227 is a phosphotyrosine (Y227). Ca(2+) is bound by residues D228, F229, D230, S233, K234, and D236. A Phosphoserine modification is found at S262. The C2 2 domain maps to 270–403; the sequence is KLGDICFSLR…NPRRPIAQWH (134 aa). The Ca(2+) site is built by D301 and D307. Residues S340 and S342 each carry the phosphoserine modification. Residues D361, D363, and D369 each coordinate Ca(2+).

This sequence belongs to the synaptotagmin family. In terms of assembly, homotetramer. Heterodimer; heterodimerizes with SYT2 in presence of calcium. Interacts with SCAMP5. Interacts with STON2. Forms a complex with SV2B, syntaxin 1 and SNAP25. Interacts with SV2A, SV2B and SV2C. Interacts with RIMS1. Interacts with PRRT2. Interacts with DNAJC5 in a phosphorylation-dependent manner. Interacts (via N-terminus) with RAB3A. Interacts with SYT12. Interacts with calmodulin. Interacts with DNM1 (via C-terminal proline-rich domain (PRD)); this interaction facilitates vesicle fission during clathrin-mediated endocytosis (CME). Requires Ca(2+) as cofactor. Post-translationally, glycosylated.

The protein localises to the cytoplasmic vesicle. Its subcellular location is the secretory vesicle membrane. It is found in the secretory vesicle. The protein resides in the synaptic vesicle membrane. It localises to the chromaffin granule membrane. The protein localises to the cytoplasm. Calcium sensor that participates in triggering neurotransmitter release at the synapse. May have a regulatory role in the membrane interactions during trafficking of synaptic vesicles at the active zone of the synapse. It binds acidic phospholipids with a specificity that requires the presence of both an acidic head group and a diacyl backbone. A Ca(2+)-dependent interaction between synaptotagmin and putative receptors for activated protein kinase C has also been reported. It can bind to at least three additional proteins in a Ca(2+)-independent manner; these are neurexins, syntaxin and AP2. Plays a role in dendrite formation by melanocytes. The sequence is that of Synaptotagmin-1 from Pongo abelii (Sumatran orangutan).